Consider the following 337-residue polypeptide: tRNA N6-adenosine threonylcarbamoyltransferase (337 aa).

Fe cation-binding residues include H110 and H114. Residues 133–137 (LVSGK), D166, G179, and N271 contribute to the substrate site. D300 contacts Fe cation.

It belongs to the KAE1 / TsaD family. Fe(2+) is required as a cofactor.

The protein resides in the cytoplasm. It catalyses the reaction L-threonylcarbamoyladenylate + adenosine(37) in tRNA = N(6)-L-threonylcarbamoyladenosine(37) in tRNA + AMP + H(+). Functionally, required for the formation of a threonylcarbamoyl group on adenosine at position 37 (t(6)A37) in tRNAs that read codons beginning with adenine. Is involved in the transfer of the threonylcarbamoyl moiety of threonylcarbamoyl-AMP (TC-AMP) to the N6 group of A37, together with TsaE and TsaB. TsaD likely plays a direct catalytic role in this reaction. The sequence is that of tRNA N6-adenosine threonylcarbamoyltransferase from Buchnera aphidicola subsp. Schizaphis graminum (strain Sg).